The sequence spans 116 residues: Iron-sulfur cluster assembly protein CyaY (116 aa).

This sequence belongs to the frataxin family.

In terms of biological role, involved in iron-sulfur (Fe-S) cluster assembly. May act as a regulator of Fe-S biogenesis. The sequence is that of Iron-sulfur cluster assembly protein CyaY from Polaromonas sp. (strain JS666 / ATCC BAA-500).